We begin with the raw amino-acid sequence, 241 residues long: Demethylmenaquinone methyltransferase (241 aa).

S-adenosyl-L-methionine is bound by residues T60, D81, and 106–107 (DA).

Belongs to the class I-like SAM-binding methyltransferase superfamily. MenG/UbiE family.

It catalyses the reaction a 2-demethylmenaquinol + S-adenosyl-L-methionine = a menaquinol + S-adenosyl-L-homocysteine + H(+). Its pathway is quinol/quinone metabolism; menaquinone biosynthesis; menaquinol from 1,4-dihydroxy-2-naphthoate: step 2/2. In terms of biological role, methyltransferase required for the conversion of demethylmenaquinol (DMKH2) to menaquinol (MKH2). This is Demethylmenaquinone methyltransferase from Staphylococcus aureus (strain Mu3 / ATCC 700698).